Reading from the N-terminus, the 82-residue chain is ATP synthase subunit c, chloroplastic (82 aa).

Transmembrane regions (helical) follow at residues 3–23 and 57–77; these read PLIA…ASIG and LAFM…LLFA.

It belongs to the ATPase C chain family. F-type ATPases have 2 components, F(1) - the catalytic core - and F(0) - the membrane proton channel. F(1) has five subunits: alpha(3), beta(3), gamma(1), delta(1), epsilon(1). F(0) has four main subunits: a(1), b(1), b'(1) and c(10-14). The alpha and beta chains form an alternating ring which encloses part of the gamma chain. F(1) is attached to F(0) by a central stalk formed by the gamma and epsilon chains, while a peripheral stalk is formed by the delta, b and b' chains.

The protein resides in the plastid. It is found in the chloroplast thylakoid membrane. F(1)F(0) ATP synthase produces ATP from ADP in the presence of a proton or sodium gradient. F-type ATPases consist of two structural domains, F(1) containing the extramembraneous catalytic core and F(0) containing the membrane proton channel, linked together by a central stalk and a peripheral stalk. During catalysis, ATP synthesis in the catalytic domain of F(1) is coupled via a rotary mechanism of the central stalk subunits to proton translocation. Its function is as follows. Key component of the F(0) channel; it plays a direct role in translocation across the membrane. A homomeric c-ring of between 10-14 subunits forms the central stalk rotor element with the F(1) delta and epsilon subunits. This Nephroselmis olivacea (Green alga) protein is ATP synthase subunit c, chloroplastic.